Consider the following 245-residue polypeptide: RAD51-like protein 1 (245 aa).

In terms of assembly, interacts with brc-2 and rad-51.

Its subcellular location is the nucleus. Its function is as follows. Has a role in the homologous recombination repair (HRR) of genomic DNA during meiosis. Required for rad-51 recruitment onto ssDNA gaps generated at stalled replication fork barriers. The polypeptide is RAD51-like protein 1 (rfs-1) (Caenorhabditis elegans).